We begin with the raw amino-acid sequence, 448 residues long: Deoxyguanosinetriphosphate triphosphohydrolase-like protein (448 aa).

Positions 67 to 260 constitute an HD domain; it reads RLTHSLEVSQ…MELADDIAYG (194 aa).

Belongs to the dGTPase family. Type 2 subfamily.

In Aliivibrio salmonicida (strain LFI1238) (Vibrio salmonicida (strain LFI1238)), this protein is Deoxyguanosinetriphosphate triphosphohydrolase-like protein.